The sequence spans 578 residues: Adenine deaminase (578 aa).

Belongs to the metallo-dependent hydrolases superfamily. Adenine deaminase family. Mn(2+) is required as a cofactor.

It catalyses the reaction adenine + H2O + H(+) = hypoxanthine + NH4(+). This Ligilactobacillus salivarius (strain UCC118) (Lactobacillus salivarius) protein is Adenine deaminase.